A 120-amino-acid chain; its full sequence is MFLLYKYDIFWAFLIISSVIPILAFLISAVLAPINKGPEKLSSYESGIEPMGDAWLQFRIRYYMFALVFVVFDVETVFLYPWAMSFDVLGVPVFIEAFIFMLILIVGLVYAWRKGALEWS.

A run of 3 helical transmembrane segments spans residues 9 to 29 (IFWA…LISA), 64 to 84 (MFAL…PWAM), and 88 to 108 (VLGV…IVGL).

The protein belongs to the complex I subunit 3 family. As to quaternary structure, NDH is composed of at least 16 different subunits, 5 of which are encoded in the nucleus.

It localises to the plastid. The protein resides in the chloroplast thylakoid membrane. It carries out the reaction a plastoquinone + NADH + (n+1) H(+)(in) = a plastoquinol + NAD(+) + n H(+)(out). It catalyses the reaction a plastoquinone + NADPH + (n+1) H(+)(in) = a plastoquinol + NADP(+) + n H(+)(out). Its function is as follows. NDH shuttles electrons from NAD(P)H:plastoquinone, via FMN and iron-sulfur (Fe-S) centers, to quinones in the photosynthetic chain and possibly in a chloroplast respiratory chain. The immediate electron acceptor for the enzyme in this species is believed to be plastoquinone. Couples the redox reaction to proton translocation, and thus conserves the redox energy in a proton gradient. The protein is NAD(P)H-quinone oxidoreductase subunit 3, chloroplastic of Citrus sinensis (Sweet orange).